A 202-amino-acid polypeptide reads, in one-letter code: Transcription antitermination protein NusB (202 aa).

The span at 1 to 11 (MTEERTADNKA) shows a compositional bias: basic and acidic residues. 2 disordered regions span residues 1–21 (MTEE…KRHG) and 169–202 (SAAK…SDEA).

Belongs to the NusB family.

Involved in transcription antitermination. Required for transcription of ribosomal RNA (rRNA) genes. Binds specifically to the boxA antiterminator sequence of the ribosomal RNA (rrn) operons. This chain is Transcription antitermination protein NusB, found in Corynebacterium jeikeium (strain K411).